The primary structure comprises 234 residues: Demethylmenaquinone methyltransferase (234 aa).

S-adenosyl-L-methionine is bound by residues T58, D79, and 106–107; that span reads NA.

This sequence belongs to the class I-like SAM-binding methyltransferase superfamily. MenG/UbiE family.

It carries out the reaction a 2-demethylmenaquinol + S-adenosyl-L-methionine = a menaquinol + S-adenosyl-L-homocysteine + H(+). Its pathway is quinol/quinone metabolism; menaquinone biosynthesis; menaquinol from 1,4-dihydroxy-2-naphthoate: step 2/2. In terms of biological role, methyltransferase required for the conversion of demethylmenaquinol (DMKH2) to menaquinol (MKH2). The chain is Demethylmenaquinone methyltransferase from Geobacillus stearothermophilus (Bacillus stearothermophilus).